The sequence spans 467 residues: Gustatory and odorant receptor 22 (467 aa).

Residues 1-106 lie on the Cytoplasmic side of the membrane; it reads MIHTQMEDAQ…MPRTTFTWCS (106 aa). The helical transmembrane segment at 107 to 127 threads the bilayer; the sequence is KAFLWAYFIYACETVIVLVVA. The Extracellular portion of the chain corresponds to 128 to 144; the sequence is RERINKFISTSDKRFDE. Residues 145-165 traverse the membrane as a helical segment; the sequence is VIYNIIFMSIMVPHFLLPVAS. The Cytoplasmic segment spans residues 166–198; sequence WRNGSEVAKFKNMWTDFQYKYLIVTGKPIVFPK. A helical transmembrane segment spans residues 199 to 219; the sequence is LYPITWTLCIVSWSLSLVIIL. The Extracellular portion of the chain corresponds to 220–238; that stretch reads SQYYLQPDFQFCHTFAYYH. Residues 239–259 traverse the membrane as a helical segment; that stretch reads IIAMLNGFCSLWFVNCTAFGT. The Cytoplasmic segment spans residues 260-304; the sequence is ASKAFAKELTDVLATERPAAKLTEYRHLWVDLSHMMQQLGKAYSN. A helical transmembrane segment spans residues 305-325; sequence MYGIYCLVIFFTTIIATYGSL. The Extracellular segment spans residues 326-337; that stretch reads SEIIEHGATYKE. The helical transmembrane segment at 338 to 358 threads the bilayer; it reads VGLFVIVFYCMSLLFIICNEA. Residues 359–414 lie on the Cytoplasmic side of the membrane; that stretch reads HHASKRVGLNFQERLLNVNLTAVDKATQKEVEMFLVAIDKNPPTMNLDGYANINRG. Residues 415–435 traverse the membrane as a helical segment; that stretch reads LITSNISFMATYLVVLMQFKL. The Extracellular segment spans residues 436–467; that stretch reads TLLRQSAKNAFISALKANLSRIRSLDADKVNT. Asparagine 453 is a glycosylation site (N-linked (GlcNAc...) asparagine).

Belongs to the insect chemoreceptor superfamily. Gustatory receptor (GR) family. Gr21a subfamily. Carbon dioxide-responsive neurons coexpress GPRgr22 and GPRgr24 in the maxillary palp at both larval and adult life stages.

Its subcellular location is the cell membrane. Functionally, gustatory receptor which mediates acceptance or avoidance behavior, depending on its substrates. GPRgr22 and GPRgr24 together are sufficient for olfactory carbon dioxide-chemosensation. The chain is Gustatory and odorant receptor 22 from Anopheles gambiae (African malaria mosquito).